Consider the following 1578-residue polypeptide: Formin-2 (1578 aa).

Composition is skewed to basic and acidic residues over residues 1 to 17 (MGNQ…DASH), 26 to 35 (AGPRDAEITK), and 57 to 66 (TSKKKSKSDS). Positions 1–73 (MGNQDGKLKR…SDSRASVFSN (73 aa)) are disordered. Ser-89 is subject to Phosphoserine. 3 disordered regions span residues 208-230 (KLLL…QPGA), 244-383 (EAEK…PSPR), and 401-458 (RQLS…GLSR). 2 stretches are compositionally biased toward polar residues: residues 273–282 (SSGSHLTSET) and 290–300 (SAVTDSLSSPA). Acidic residues predominate over residues 322 to 333 (DTDEECEEDAFE). A compositionally biased stretch (basic and acidic residues) spans 351–364 (ASQRLEKEPEEGMR). Composition is skewed to low complexity over residues 404–418 (SSPN…NQSP) and 427–442 (SVSR…AAAP). A phosphoserine mark is found at Ser-459, Ser-489, and Ser-493. The disordered stretch occupies residues 587 to 634 (SMDYSEGQFPRREPSMWPSSKLPEEEPSPKDVDTEPKSSILESPKKCS). Residues 608–622 (LPEEEPSPKDVDTEP) show a composition bias toward basic and acidic residues. A coiled-coil region spans residues 643 to 683 (DVKSEGQATVIQQLEQTIEDLRTKIAELEKQYPALDLEGPR). 3 disordered regions span residues 714–765 (RTLE…SGPQ), 786–836 (DAQQ…GNNC), and 880–944 (PALQ…MGIS). An FH1 domain is found at 735 to 1124 (PPPKAPPEGL…GCGFLFPPLP (390 aa)). The segment covering 786 to 795 (DAQQIQSASQ) has biased composition (polar residues). Positions 803–817 (LGSDSQGQPSQPSLH) are enriched in low complexity. Residues 818–827 (TESETSHEHS) are compositionally biased toward basic and acidic residues. Pro residues predominate over residues 893–944 (LPAPPQPPPLPGLGVPPPPPAPPLPGMGIPPPPPLPGMGIPPPPPLPGMGIS). Repeat copies occupy residues 919–929 (MGIPPPPPLPG), 930–940 (MGIPPPPPLPG), 941–951 (MGISPLPPLPG), 952–962 (MGIPPPPPLPG), 963–973 (VGIPPPPPLPG), 974–984 (VGIPPPPPLPG), 985–995 (VGIPPPPPLPG), 996–1006 (VGIPPPPPLPG), 1007–1017 (VGIPPPPPLPG), 1018–1028 (VGIPPPPPLPG), 1029–1039 (VGIPPPPPLPG), and 1040–1050 (VGIPPPPPLPG). The 12 X 11 AA tandem repeats of [MV]-G-I-P-P-P-P-P-L-P-G stretch occupies residues 919–1039 (MGIPPPPPLP…GIPPPPPLPG (121 aa)). The span at 1037 to 1097 (LPGVGIPPPP…PPPPLLPGSG (61 aa)) shows a compositional bias: pro residues. The disordered stretch occupies residues 1037 to 1108 (LPGVGIPPPP…PHSSQVGSST (72 aa)). The region spanning 1139 to 1554 (RKQLIEPCRP…KEAEEVCRQK (416 aa)) is the FH2 domain. Residues 1419-1455 (QELFQASQMKFEDFQKDLRKLKKDLKACEAEAGKVYQ) adopt a coiled-coil conformation. The interval 1571-1578 (KAKISMKT) is important for interaction with SPIRE1.

This sequence belongs to the formin homology family. Cappuccino subfamily. As to quaternary structure, interacts with SPIRE1. Binds actin. Interacts with CDKN1A. As to expression, detected in brain and in oocytes (at protein level). Expressed almost exclusively in the developing and mature central nervous system. Detected in oocytes.

It localises to the cytoplasm. The protein localises to the cytoskeleton. Its subcellular location is the cytosol. It is found in the perinuclear region. The protein resides in the nucleus. It localises to the nucleolus. The protein localises to the cell membrane. Its subcellular location is the cell cortex. It is found in the cytoplasmic vesicle membrane. Functionally, actin-binding protein that is involved in actin cytoskeleton assembly and reorganization. Acts as an actin nucleation factor and promotes assembly of actin filaments together with SPIRE1 and SPIRE2. Involved in intracellular vesicle transport along actin fibers, providing a novel link between actin cytoskeleton dynamics and intracellular transport. Required for asymmetric spindle positioning, asymmetric oocyte division and polar body extrusion during female germ cell meiosis. Plays a role in responses to DNA damage, cellular stress and hypoxia by protecting CDKN1A against degradation, and thereby plays a role in stress-induced cell cycle arrest. Also acts in the nucleus: together with SPIRE1 and SPIRE2, promotes assembly of nuclear actin filaments in response to DNA damage in order to facilitate movement of chromatin and repair factors after DNA damage. Protects cells against apoptosis by protecting CDKN1A against degradation. The chain is Formin-2 (Fmn2) from Mus musculus (Mouse).